We begin with the raw amino-acid sequence, 141 residues long: Large ribosomal subunit protein uL11 (141 aa).

Belongs to the universal ribosomal protein uL11 family. In terms of assembly, part of the ribosomal stalk of the 50S ribosomal subunit. Interacts with L10 and the large rRNA to form the base of the stalk. L10 forms an elongated spine to which L12 dimers bind in a sequential fashion forming a multimeric L10(L12)X complex. In terms of processing, one or more lysine residues are methylated.

Forms part of the ribosomal stalk which helps the ribosome interact with GTP-bound translation factors. In Pelodictyon phaeoclathratiforme (strain DSM 5477 / BU-1), this protein is Large ribosomal subunit protein uL11.